The following is a 644-amino-acid chain: Transmembrane 9 superfamily member 9 (644 aa).

An N-terminal signal peptide occupies residues 1–27; the sequence is MEFYRSSRRLQILGSVILLLSIHVAHS. At 28–281 the chain is on the lumenal side; the sequence is FYLPGVAPQD…YLLMSDNQIH (254 aa). Residues 282–302 form a helical membrane-spanning segment; the sequence is WFSIVNSLMIVLFLSGMVAMI. The Cytoplasmic portion of the chain corresponds to 303-351; that stretch reads MLRTLYRDISRYNELETQEEAQEETGWKLVHGDVFRPPANSDLLCVYVG. The chain crosses the membrane as a helical span at residues 352–372; the sequence is TGVQCLGMVLVTMIFAMLGFL. Residues 373-377 lie on the Lumenal side of the membrane; it reads SPSNR. A helical membrane pass occupies residues 378 to 398; that stretch reads GGLMTAMLLLWVFMGLFAGYA. Residues 399–418 are Cytoplasmic-facing; sequence SSRLYKMFKGTEWKRIAFRT. The chain crosses the membrane as a helical span at residues 419-439; that stretch reads AFLFPAVVSAIFFVLNALIWG. Residues 440 to 451 are Lumenal-facing; the sequence is QKSSGAVPFGTM. Residues 452–472 traverse the membrane as a helical segment; the sequence is FALIFLWFGISVPLVFVGAYL. Residues 473 to 501 are Cytoplasmic-facing; sequence GFKKPPLDDPVKTNKIPRQIPEQAWYMNP. The chain crosses the membrane as a helical span at residues 502-522; that stretch reads IFSILIGGILPFGAVFIELFF. Residues 523 to 534 lie on the Lumenal side of the membrane; it reads ILTSIWLNQFYY. Residues 535 to 555 traverse the membrane as a helical segment; it reads IFGFLFLVFVILMVTCAEITI. The Cytoplasmic segment spans residues 556–573; it reads VLCYFQLCSEDYLWWWRS. A helical transmembrane segment spans residues 574 to 594; sequence YLTSGSSAVYLFLYAAFYFFT. Residues 595 to 600 lie on the Lumenal side of the membrane; sequence KLQITK. A helical transmembrane segment spans residues 601-621; sequence LVSAMLYFGYMLIASYAFFVL. At 622–644 the chain is on the cytoplasmic side; it reads TGTIGFYACLWFTRLIYSSVKID. The Endoplasmic reticulum export signal signature appears at 633–638; sequence FTRLIY. The Golgi retention signal motif lies at 642-644; the sequence is KID.

Belongs to the nonaspanin (TM9SF) (TC 9.A.2) family.

The protein resides in the endosome membrane. The protein localises to the golgi apparatus membrane. This chain is Transmembrane 9 superfamily member 9, found in Arabidopsis thaliana (Mouse-ear cress).